The chain runs to 688 residues: Elongation factor G (688 aa).

In terms of domain architecture, tr-type G spans 6–280 (KLFRNFGIMA…AVVDFLPSPI (275 aa)). GTP is bound by residues 15-22 (AHIDAGKT), 79-83 (DTPGH), and 133-136 (NKMD).

It belongs to the TRAFAC class translation factor GTPase superfamily. Classic translation factor GTPase family. EF-G/EF-2 subfamily.

The protein resides in the cytoplasm. Catalyzes the GTP-dependent ribosomal translocation step during translation elongation. During this step, the ribosome changes from the pre-translocational (PRE) to the post-translocational (POST) state as the newly formed A-site-bound peptidyl-tRNA and P-site-bound deacylated tRNA move to the P and E sites, respectively. Catalyzes the coordinated movement of the two tRNA molecules, the mRNA and conformational changes in the ribosome. This is Elongation factor G from Ureaplasma urealyticum serovar 10 (strain ATCC 33699 / Western).